Consider the following 488-residue polypeptide: 3-octaprenyl-4-hydroxybenzoate carboxy-lyase (488 aa).

N172 lines the Mn(2+) pocket. Prenylated FMN is bound by residues 175 to 177 (IYR), 189 to 191 (RWL), and 194 to 195 (RG). Position 238 (E238) interacts with Mn(2+). D287 functions as the Proton donor in the catalytic mechanism.

Belongs to the UbiD family. Homohexamer. Requires prenylated FMN as cofactor. Mn(2+) is required as a cofactor.

It is found in the cell membrane. It catalyses the reaction a 4-hydroxy-3-(all-trans-polyprenyl)benzoate + H(+) = a 2-(all-trans-polyprenyl)phenol + CO2. It functions in the pathway cofactor biosynthesis; ubiquinone biosynthesis. Functionally, catalyzes the decarboxylation of 3-octaprenyl-4-hydroxy benzoate to 2-octaprenylphenol, an intermediate step in ubiquinone biosynthesis. The polypeptide is 3-octaprenyl-4-hydroxybenzoate carboxy-lyase (Pseudomonas syringae pv. tomato (strain ATCC BAA-871 / DC3000)).